The sequence spans 99 residues: Malonate decarboxylase acyl carrier protein (99 aa).

Serine 25 bears the O-(phosphoribosyl dephospho-coenzyme A)serine mark.

Belongs to the MdcC family. Covalently binds the prosthetic group of malonate decarboxylase.

The protein resides in the cytoplasm. Functionally, subunit of malonate decarboxylase, it is an acyl carrier protein to which acetyl and malonyl thioester residues are bound via a 2'-(5''-phosphoribosyl)-3'-dephospho-CoA prosthetic group and turn over during the catalytic mechanism. The polypeptide is Malonate decarboxylase acyl carrier protein (Pseudomonas putida (strain W619)).